We begin with the raw amino-acid sequence, 1132 residues long: SNF2 domain-containing protein CLASSY 4 (1132 aa).

4 disordered regions span residues 24–104 (NKSK…SKSF), 224–331 (LRGE…HHKK), 376–396 (DPVVRESSSEKVNEHGKPRER), and 525–544 (PSVNDNKKCSDRKGDPLPNR). Residues 47 to 54 (KRRVNMRD) carry the Nuclear localization signal motif. Residues 81-90 (EYPEGKRDDE) show a composition bias toward basic and acidic residues. The segment covering 92 to 103 (VGSTSGNLQSKS) has biased composition (polar residues). Positions 233-242 (SDEVVSLSSS) are enriched in low complexity. Acidic residues predominate over residues 243-254 (SDDEEDPLEELG). The segment covering 255 to 269 (TDSREEVSGEDRDSG) has biased composition (basic and acidic residues). 2 stretches are compositionally biased toward acidic residues: residues 270 to 282 (ESDMDEDANDSDS) and 291 to 309 (DSSDVESSDSDFVCSEDEE). Basic and acidic residues-rich tracts occupy residues 310-326 (GGTRDDATCEKNPSEKV), 376-392 (DPVVRESSSEKVNEHGK), and 525-539 (PSVNDNKKCSDRKGD). Residues 603–796 (SVGVKGSGGC…SNVLCLARPA (194 aa)) form the Helicase ATP-binding domain. Position 616-623 (616-623 (HKAGTGKT)) interacts with ATP. Positions 747-750 (DEGH) match the DEAH box motif. In terms of domain architecture, Helicase C-terminal spans 934 to 1087 (DFIRISGTVK…ELVFSSTNEK (154 aa)).

This sequence belongs to the SNF2/RAD54 helicase family. In terms of assembly, interacts with NRPD1.

The protein resides in the nucleus. Its function is as follows. Probable chromatin remodeling factor. This is SNF2 domain-containing protein CLASSY 4 (CLSY4) from Arabidopsis thaliana (Mouse-ear cress).